We begin with the raw amino-acid sequence, 283 residues long: Probable cytochrome c oxidase subunit 3 (283 aa).

6 helical membrane passes run 26–46 (PWPV…VSFM), 51–71 (FNIY…YSWW), 94–114 (IGMA…FASF), 179–199 (CVTA…MQAY), 217–237 (FYLA…FLII), and 261–281 (AWYW…VYIF).

It belongs to the cytochrome c oxidase subunit 3 family.

It localises to the cell membrane. The enzyme catalyses 4 Fe(II)-[cytochrome c] + O2 + 8 H(+)(in) = 4 Fe(III)-[cytochrome c] + 2 H2O + 4 H(+)(out). The chain is Probable cytochrome c oxidase subunit 3 (ctaE) from Rickettsia conorii (strain ATCC VR-613 / Malish 7).